The chain runs to 87 residues: Small ribosomal subunit protein uS17 (87 aa).

It belongs to the universal ribosomal protein uS17 family. In terms of assembly, part of the 30S ribosomal subunit.

One of the primary rRNA binding proteins, it binds specifically to the 5'-end of 16S ribosomal RNA. This Staphylococcus haemolyticus (strain JCSC1435) protein is Small ribosomal subunit protein uS17.